The chain runs to 356 residues: Magnesium-protoporphyrin IX monomethyl ester [oxidative] cyclase (356 aa).

Belongs to the AcsF family. Fe cation serves as cofactor.

The enzyme catalyses Mg-protoporphyrin IX 13-monomethyl ester + 3 NADPH + 3 O2 + 2 H(+) = 3,8-divinyl protochlorophyllide a + 3 NADP(+) + 5 H2O. It functions in the pathway porphyrin-containing compound metabolism; chlorophyll biosynthesis (light-independent). Functionally, catalyzes the formation of the isocyclic ring in chlorophyll biosynthesis. Mediates the cyclase reaction, which results in the formation of divinylprotochlorophyllide (Pchlide) characteristic of all chlorophylls from magnesium-protoporphyrin IX 13-monomethyl ester (MgPMME). This is Magnesium-protoporphyrin IX monomethyl ester [oxidative] cyclase from Parasynechococcus marenigrum (strain WH8102).